Reading from the N-terminus, the 250-residue chain is Small ribosomal subunit protein uS2 (250 aa).

This sequence belongs to the universal ribosomal protein uS2 family.

This Paraburkholderia phymatum (strain DSM 17167 / CIP 108236 / LMG 21445 / STM815) (Burkholderia phymatum) protein is Small ribosomal subunit protein uS2.